Consider the following 450-residue polypeptide: Methylenetetrahydrofolate--tRNA-(uracil-5-)-methyltransferase TrmFO (450 aa).

FAD is bound at residue 10–15 (GGGLAG).

It belongs to the MnmG family. TrmFO subfamily. FAD serves as cofactor.

The protein resides in the cytoplasm. It catalyses the reaction uridine(54) in tRNA + (6R)-5,10-methylene-5,6,7,8-tetrahydrofolate + NADH + H(+) = 5-methyluridine(54) in tRNA + (6S)-5,6,7,8-tetrahydrofolate + NAD(+). The catalysed reaction is uridine(54) in tRNA + (6R)-5,10-methylene-5,6,7,8-tetrahydrofolate + NADPH + H(+) = 5-methyluridine(54) in tRNA + (6S)-5,6,7,8-tetrahydrofolate + NADP(+). In terms of biological role, catalyzes the folate-dependent formation of 5-methyl-uridine at position 54 (M-5-U54) in all tRNAs. The protein is Methylenetetrahydrofolate--tRNA-(uracil-5-)-methyltransferase TrmFO of Anaeromyxobacter dehalogenans (strain 2CP-C).